Here is a 223-residue protein sequence, read N- to C-terminus: Phosphoribosylformylglycinamidine synthase subunit PurQ (223 aa).

One can recognise a Glutamine amidotransferase type-1 domain in the interval lysine 4–alanine 223. The active-site Nucleophile is cysteine 87. Active-site residues include histidine 195 and glutamate 197.

As to quaternary structure, part of the FGAM synthase complex composed of 1 PurL, 1 PurQ and 2 PurS subunits.

Its subcellular location is the cytoplasm. It catalyses the reaction N(2)-formyl-N(1)-(5-phospho-beta-D-ribosyl)glycinamide + L-glutamine + ATP + H2O = 2-formamido-N(1)-(5-O-phospho-beta-D-ribosyl)acetamidine + L-glutamate + ADP + phosphate + H(+). The enzyme catalyses L-glutamine + H2O = L-glutamate + NH4(+). Its pathway is purine metabolism; IMP biosynthesis via de novo pathway; 5-amino-1-(5-phospho-D-ribosyl)imidazole from N(2)-formyl-N(1)-(5-phospho-D-ribosyl)glycinamide: step 1/2. Its function is as follows. Part of the phosphoribosylformylglycinamidine synthase complex involved in the purines biosynthetic pathway. Catalyzes the ATP-dependent conversion of formylglycinamide ribonucleotide (FGAR) and glutamine to yield formylglycinamidine ribonucleotide (FGAM) and glutamate. The FGAM synthase complex is composed of three subunits. PurQ produces an ammonia molecule by converting glutamine to glutamate. PurL transfers the ammonia molecule to FGAR to form FGAM in an ATP-dependent manner. PurS interacts with PurQ and PurL and is thought to assist in the transfer of the ammonia molecule from PurQ to PurL. The protein is Phosphoribosylformylglycinamidine synthase subunit PurQ of Corynebacterium glutamicum (strain ATCC 13032 / DSM 20300 / JCM 1318 / BCRC 11384 / CCUG 27702 / LMG 3730 / NBRC 12168 / NCIMB 10025 / NRRL B-2784 / 534).